A 475-amino-acid polypeptide reads, in one-letter code: MGCVQSFRNFCDRPKNTNVRISLPAVCFVWQIAMIILFGVFIRYNEEADTHWVEYRKKENISSDIENDFYFRYPSFQDVHVMIFVGFGFLMTFLKRYSFGAVGFNFLIAAFGLQWALLMQGWFHSLDYTDGKIKIGIENLINADFCVAGCLIAYGAVLGKVSPVQLMVLTLFGITLFAVEEYIILNLIHARDAGGSMVIHTFGGYYGLSISWMLYRPNLEQSSNLQGSVYQSDVFAMIGTLFLWMFWPSFNSAITDHGDGQHRAAINTYLALASTVLTTVAISSLFQKHGKLDMVHIQNSTLAGGVAVGTAAEFMLMPYGSLIVGFCCGIISTLGYIYLTPFMEKYLKIQDTCGIHNLHAMPGLIGGIVGAITAAAATESVYGKEGLVNTFDFVGPFKNMVPTTQGGHQAAGLCVAICFGIGGGIMVGCILRLPIWCDPADDNCFNDEPYWELPEEEEIIPPILHYNNHMVNKDV.

Over 1 to 20 (MGCVQSFRNFCDRPKNTNVR) the chain is Cytoplasmic. A helical membrane pass occupies residues 21-41 (ISLPAVCFVWQIAMIILFGVF). Residues 42-73 (IRYNEEADTHWVEYRKKENISSDIENDFYFRY) are Extracellular-facing. An N-linked (GlcNAc...) asparagine glycan is attached at asparagine 60. The helical transmembrane segment at 74–94 (PSFQDVHVMIFVGFGFLMTFL) threads the bilayer. Topologically, residues 95–98 (KRYS) are cytoplasmic. A helical transmembrane segment spans residues 99–119 (FGAVGFNFLIAAFGLQWALLM). The Extracellular segment spans residues 120–138 (QGWFHSLDYTDGKIKIGIE). The chain crosses the membrane as a helical span at residues 139–159 (NLINADFCVAGCLIAYGAVLG). At 160 to 167 (KVSPVQLM) the chain is on the cytoplasmic side. The chain crosses the membrane as a helical span at residues 168 to 188 (VLTLFGITLFAVEEYIILNLI). The Extracellular segment spans residues 189–193 (HARDA). A helical transmembrane segment spans residues 194–214 (GGSMVIHTFGGYYGLSISWML). At 215 to 233 (YRPNLEQSSNLQGSVYQSD) the chain is on the cytoplasmic side. The helical transmembrane segment at 234-254 (VFAMIGTLFLWMFWPSFNSAI) threads the bilayer. The Extracellular segment spans residues 255–265 (TDHGDGQHRAA). Residues 266 to 286 (INTYLALASTVLTTVAISSLF) traverse the membrane as a helical segment. Over 287 to 299 (QKHGKLDMVHIQN) the chain is Cytoplasmic. The chain crosses the membrane as a helical span at residues 300–320 (STLAGGVAVGTAAEFMLMPYG). A topological domain (extracellular) is located at residue serine 321. Residues 322 to 342 (LIVGFCCGIISTLGYIYLTPF) form a helical membrane-spanning segment. The Cytoplasmic portion of the chain corresponds to 343–357 (MEKYLKIQDTCGIHN). Residues 358–378 (LHAMPGLIGGIVGAITAAAAT) form a helical membrane-spanning segment. The Extracellular segment spans residues 379 to 410 (ESVYGKEGLVNTFDFVGPFKNMVPTTQGGHQA). The helical transmembrane segment at 411–431 (AGLCVAICFGIGGGIMVGCIL) threads the bilayer. Residues 432–475 (RLPIWCDPADDNCFNDEPYWELPEEEEIIPPILHYNNHMVNKDV) are Cytoplasmic-facing.

This sequence belongs to the ammonium transporter (TC 2.A.49) family. Rh subfamily. In terms of assembly, homotrimer.

The protein resides in the apical cell membrane. Functions as an ammonia transporter. May play a role in the elimination of ammonia in the gill. In Tetraodon nigroviridis (Spotted green pufferfish), this protein is Ammonium transporter Rh type C (rhcg).